The following is a 202-amino-acid chain: Recombination protein RecR (202 aa).

A C4-type zinc finger spans residues 61–76; the sequence is CARCNSFTEDDVCVIC. The Toprim domain maps to 84-179; it reads SLLCIVETPA…KVTRLARGVP (96 aa).

The protein belongs to the RecR family.

May play a role in DNA repair. It seems to be involved in an RecBC-independent recombinational process of DNA repair. It may act with RecF and RecO. The sequence is that of Recombination protein RecR from Bordetella avium (strain 197N).